We begin with the raw amino-acid sequence, 465 residues long: UDP-N-acetylmuramate--L-alanine ligase (465 aa).

Position 112–118 (112–118) interacts with ATP; the sequence is GTHGKTT.

This sequence belongs to the MurCDEF family.

The protein localises to the cytoplasm. It carries out the reaction UDP-N-acetyl-alpha-D-muramate + L-alanine + ATP = UDP-N-acetyl-alpha-D-muramoyl-L-alanine + ADP + phosphate + H(+). It participates in cell wall biogenesis; peptidoglycan biosynthesis. In terms of biological role, cell wall formation. The chain is UDP-N-acetylmuramate--L-alanine ligase from Burkholderia cenocepacia (strain ATCC BAA-245 / DSM 16553 / LMG 16656 / NCTC 13227 / J2315 / CF5610) (Burkholderia cepacia (strain J2315)).